A 249-amino-acid polypeptide reads, in one-letter code: MMEVRINKFLSEAGVASRRKAEKLILEGRVKVNGEVVRSLGVKVNPEVDIVEVDGKPVKPQRKRYIILNKPCCYLTQLGRSPDGRKTIEELIKDIPERVFPVGRLDYNTEGLLILTNDGELANRILHPRYKLPKVYLALVEGKVDQKTLKRMKQGIELEDGFAKPDNIRIVRYEGKNTLLEITFHEGRKHLVKRFLGAFGHKVKRLKRIAIGPIKLGKLSPGKWRELNQGELAQLFKAVGLKYVPRKRR.

An S4 RNA-binding domain is found at 4 to 71 (VRINKFLSEA…RKRYIILNKP (68 aa)). Catalysis depends on Asp106, which acts as the Nucleophile.

It belongs to the pseudouridine synthase RsuA family.

The enzyme catalyses a uridine in RNA = a pseudouridine in RNA. This is an uncharacterized protein from Aquifex aeolicus (strain VF5).